We begin with the raw amino-acid sequence, 525 residues long: 2-isopropylmalate synthase (525 aa).

Residues 12–274 enclose the Pyruvate carboxyltransferase domain; sequence VVIFDTTLRD…WNKIDTTQLT (263 aa). Positions 21, 209, 211, and 245 each coordinate Mn(2+). The interval 398–525 is regulatory domain; that stretch reads KLLSLSVIAG…GHGASAAAAS (128 aa).

This sequence belongs to the alpha-IPM synthase/homocitrate synthase family. LeuA type 1 subfamily. Homodimer. It depends on Mn(2+) as a cofactor.

Its subcellular location is the cytoplasm. The catalysed reaction is 3-methyl-2-oxobutanoate + acetyl-CoA + H2O = (2S)-2-isopropylmalate + CoA + H(+). The protein operates within amino-acid biosynthesis; L-leucine biosynthesis; L-leucine from 3-methyl-2-oxobutanoate: step 1/4. Catalyzes the condensation of the acetyl group of acetyl-CoA with 3-methyl-2-oxobutanoate (2-ketoisovalerate) to form 3-carboxy-3-hydroxy-4-methylpentanoate (2-isopropylmalate). The protein is 2-isopropylmalate synthase of Bradyrhizobium sp. (strain ORS 278).